We begin with the raw amino-acid sequence, 318 residues long: Putative S-adenosyl-L-methionine-dependent methyltransferase BCG_0781c (318 aa).

S-adenosyl-L-methionine is bound by residues aspartate 135 and 164-165; that span reads DL.

This sequence belongs to the UPF0677 family.

Exhibits S-adenosyl-L-methionine-dependent methyltransferase activity. The chain is Putative S-adenosyl-L-methionine-dependent methyltransferase BCG_0781c from Mycobacterium bovis (strain BCG / Pasteur 1173P2).